Consider the following 419-residue polypeptide: Synaptotagmin-1 (419 aa).

Residues Met1–Pro57 are Vesicular-facing. Asn25 is a glycosylation site (N-linked (GlcNAc...) asparagine). The helical transmembrane segment at Pro58–Cys80 threads the bilayer. S-palmitoyl cysteine attachment occurs at residues Cys75, Cys76, Cys78, Cys80, and Cys83. The Cytoplasmic portion of the chain corresponds to Lys81–Lys419. The disordered stretch occupies residues Lys108–Lys139. Over residues Gln117 to Lys131 the composition is skewed to acidic residues. Position 126 is a phosphothreonine (Thr126). The tract at residues Glu133 to Asn379 is phospholipid binding. One can recognise a C2 1 domain in the interval Lys139–Arg258. Ca(2+) contacts are provided by Leu169, Asp170, and Asp176. The residue at position 227 (Tyr227) is a Phosphotyrosine. Asp228, Phe229, Asp230, Ser233, Lys234, and Asp236 together coordinate Ca(2+). Position 262 is a phosphoserine (Ser262). Residues Lys270 to His403 form the C2 2 domain. Ca(2+)-binding residues include Asp301 and Asp307. A phosphoserine mark is found at Ser340 and Ser342. 3 residues coordinate Ca(2+): Asp361, Asp363, and Asp369.

Belongs to the synaptotagmin family. As to quaternary structure, homotetramer. Heterodimer; heterodimerizes with SYT2 in presence of calcium. Interacts with SCAMP5. Interacts with STON2. Forms a complex with SV2B, syntaxin 1 and SNAP25. Interacts with SV2A, SV2B and SV2C. Interacts with RIMS1. Interacts with PRRT2. Interacts with DNAJC5 in a phosphorylation-dependent manner. Interacts (via N-terminus) with RAB3A. Interacts with SYT12. Interacts with calmodulin. Interacts with DNM1 (via C-terminal proline-rich domain (PRD)); this interaction facilitates vesicle fission during clathrin-mediated endocytosis (CME). It depends on Ca(2+) as a cofactor. Glycosylated.

It localises to the cytoplasmic vesicle. The protein resides in the secretory vesicle membrane. Its subcellular location is the secretory vesicle. It is found in the synaptic vesicle membrane. The protein localises to the chromaffin granule membrane. It localises to the cytoplasm. Functionally, calcium sensor that participates in triggering neurotransmitter release at the synapse. May have a regulatory role in the membrane interactions during trafficking of synaptic vesicles at the active zone of the synapse. It binds acidic phospholipids with a specificity that requires the presence of both an acidic head group and a diacyl backbone. A Ca(2+)-dependent interaction between synaptotagmin and putative receptors for activated protein kinase C has also been reported. It can bind to at least three additional proteins in a Ca(2+)-independent manner; these are neurexins, syntaxin and AP2. Plays a role in dendrite formation by melanocytes. The chain is Synaptotagmin-1 from Macaca fascicularis (Crab-eating macaque).